We begin with the raw amino-acid sequence, 838 residues long: Polyribonucleotide nucleotidyltransferase (838 aa).

Residues Asp494 and Asp500 each contribute to the Mg(2+) site. The 60-residue stretch at 561–620 (PRMESMLIDKGKIKNVIGAGGKNVREICEKTGAKIEISQDGTVMIYAVGREAIESAKDMI) folds into the KH domain. The region spanning 630-697 (GKIYSGEVCE…DKDHIQLSMR (68 aa)) is the S1 motif domain. Positions 747-757 (GGASAGRNGRG) are enriched in gly residues. The segment at 747–838 (GGASAGRNGR…PAAPKKPRFF (92 aa)) is disordered. A compositionally biased stretch (low complexity) spans 788–810 (AGSSGYSSDSSSGNTKSSSSESS). The segment covering 811-820 (GGTGGRGRNG) has biased composition (gly residues).

This sequence belongs to the polyribonucleotide nucleotidyltransferase family. Requires Mg(2+) as cofactor.

Its subcellular location is the cytoplasm. The catalysed reaction is RNA(n+1) + phosphate = RNA(n) + a ribonucleoside 5'-diphosphate. Its function is as follows. Involved in mRNA degradation. Catalyzes the phosphorolysis of single-stranded polyribonucleotides processively in the 3'- to 5'-direction. The protein is Polyribonucleotide nucleotidyltransferase of Anaplasma phagocytophilum (strain HZ).